The sequence spans 171 residues: Co-chaperone protein HscB (171 aa).

A J domain is found at 2-74 (DYFTLFGLPA…LARAEYLLSL (73 aa)).

It belongs to the HscB family. Interacts with HscA and stimulates its ATPase activity. Interacts with IscU.

Functionally, co-chaperone involved in the maturation of iron-sulfur cluster-containing proteins. Seems to help targeting proteins to be folded toward HscA. This is Co-chaperone protein HscB from Enterobacter sp. (strain 638).